A 398-amino-acid chain; its full sequence is 1-deoxy-D-xylulose 5-phosphate reductoisomerase (398 aa).

NADPH is bound by residues Thr10, Gly11, Ser12, Ile13, Lys37, Asn38, and Asn124. Lys125 serves as a coordination point for 1-deoxy-D-xylulose 5-phosphate. An NADPH-binding site is contributed by Glu126. Asp150 provides a ligand contact to Mn(2+). Residues Ser151, Glu152, Ser186, and His209 each contribute to the 1-deoxy-D-xylulose 5-phosphate site. Glu152 is a Mn(2+) binding site. An NADPH-binding site is contributed by Gly215. 4 residues coordinate 1-deoxy-D-xylulose 5-phosphate: Ser222, Asn227, Lys228, and Glu231. Position 231 (Glu231) interacts with Mn(2+).

It belongs to the DXR family. As to quaternary structure, homodimer. The cofactor is Mg(2+). Mn(2+) serves as cofactor.

It carries out the reaction 2-C-methyl-D-erythritol 4-phosphate + NADP(+) = 1-deoxy-D-xylulose 5-phosphate + NADPH + H(+). Its pathway is isoprenoid biosynthesis; isopentenyl diphosphate biosynthesis via DXP pathway; isopentenyl diphosphate from 1-deoxy-D-xylulose 5-phosphate: step 1/6. Its function is as follows. Catalyzes the NADPH-dependent rearrangement and reduction of 1-deoxy-D-xylulose-5-phosphate (DXP) to 2-C-methyl-D-erythritol 4-phosphate (MEP). The protein is 1-deoxy-D-xylulose 5-phosphate reductoisomerase of Buchnera aphidicola subsp. Schizaphis graminum (strain Sg).